A 438-amino-acid chain; its full sequence is MSAPRVSFVSLGCPKALVDSERIITGLRSEGYEISRKHDGADLVIVNTCGFLDSARDESLEAIGLALNENGKVIVTGCLGAEPDVIRERHPNVLAITGPQAYESVMNAVHEVAPPPPHDPFVDLVPPQGVKLTPRHYAYLKISEGCSNRCSFCIIPALRGDLVSRPINEVLREAEKLVQAGVKEILVISQDTSAYGLDIKYQEAMWQDRTVRTKFLDLSRELGEMGVWVRMHYVYPYPHVDEVIPLMAEGKILPYLDIPFQHASPAVLKNMRRPAHQEKTSRRIQAWRETCPDLAVRSTFIVGYPGETEEDFQMLLDWLDEAKIERAGCFKYEAVKGAKANDLGLEQVPEEVKEARWHRFMAKQQQISTNLLKKKVGKRLPVIIDEANGTIGKGRTRYDAPEIDGSVHISSRRPLRVGDIVTVKIEASDAYDLHGTAV.

Residues 4-114 (PRVSFVSLGC…VMNAVHEVAP (111 aa)) form the MTTase N-terminal domain. Residues cysteine 13, cysteine 49, cysteine 78, cysteine 146, cysteine 150, and cysteine 153 each contribute to the [4Fe-4S] cluster site. The Radical SAM core domain maps to 132–370 (LTPRHYAYLK…MAKQQQISTN (239 aa)). The region spanning 373 to 438 (KKKVGKRLPV…DAYDLHGTAV (66 aa)) is the TRAM domain.

It belongs to the methylthiotransferase family. RimO subfamily. Requires [4Fe-4S] cluster as cofactor.

It localises to the cytoplasm. It carries out the reaction L-aspartate(89)-[ribosomal protein uS12]-hydrogen + (sulfur carrier)-SH + AH2 + 2 S-adenosyl-L-methionine = 3-methylsulfanyl-L-aspartate(89)-[ribosomal protein uS12]-hydrogen + (sulfur carrier)-H + 5'-deoxyadenosine + L-methionine + A + S-adenosyl-L-homocysteine + 2 H(+). In terms of biological role, catalyzes the methylthiolation of an aspartic acid residue of ribosomal protein uS12. This is Ribosomal protein uS12 methylthiotransferase RimO from Brucella ovis (strain ATCC 25840 / 63/290 / NCTC 10512).